The primary structure comprises 129 residues: Large ribosomal subunit protein uL22 (129 aa).

The protein belongs to the universal ribosomal protein uL22 family. Part of the 50S ribosomal subunit.

Its function is as follows. This protein binds specifically to 23S rRNA; its binding is stimulated by other ribosomal proteins, e.g. L4, L17, and L20. It is important during the early stages of 50S assembly. It makes multiple contacts with different domains of the 23S rRNA in the assembled 50S subunit and ribosome. In terms of biological role, the globular domain of the protein is located near the polypeptide exit tunnel on the outside of the subunit, while an extended beta-hairpin is found that lines the wall of the exit tunnel in the center of the 70S ribosome. This Agrobacterium fabrum (strain C58 / ATCC 33970) (Agrobacterium tumefaciens (strain C58)) protein is Large ribosomal subunit protein uL22.